We begin with the raw amino-acid sequence, 247 residues long: Caffeoyl-CoA O-methyltransferase 1 (247 aa).

Lysine 21 contributes to the substrate binding site. S-adenosyl-L-methionine contacts are provided by residues threonine 63, glutamate 85, 87–88, serine 93, aspartate 111, and alanine 140; that span reads GV. Position 163 (aspartate 163) interacts with substrate. Aspartate 163 serves as a coordination point for a divalent metal cation. Aspartate 165 is a binding site for S-adenosyl-L-methionine. 2 residues coordinate a divalent metal cation: aspartate 189 and asparagine 190. Asparagine 194 lines the substrate pocket.

It belongs to the class I-like SAM-binding methyltransferase superfamily. Cation-dependent O-methyltransferase family. CCoAMT subfamily. It depends on a divalent metal cation as a cofactor.

It carries out the reaction (E)-caffeoyl-CoA + S-adenosyl-L-methionine = (E)-feruloyl-CoA + S-adenosyl-L-homocysteine + H(+). The protein operates within aromatic compound metabolism; phenylpropanoid biosynthesis. Its function is as follows. Methylates caffeoyl-CoA to feruloyl-CoA and 5-hydroxyferuloyl-CoA to sinapoyl-CoA. Plays a role in the synthesis of feruloylated polysaccharides. Involved in the reinforcement of the plant cell wall. Also involved in the responding to wounding or pathogen challenge by the increased formation of cell wall-bound ferulic acid polymers. The protein is Caffeoyl-CoA O-methyltransferase 1 (CCOAOMT1) of Populus trichocarpa (Western balsam poplar).